A 151-amino-acid chain; its full sequence is UPF0208 membrane protein YfbV (151 aa).

2 helical membrane-spanning segments follow: residues 46–65 (YAIR…QIAL) and 69–91 (LGPA…WWLG).

Belongs to the UPF0208 family.

It localises to the cell inner membrane. This is UPF0208 membrane protein YfbV from Escherichia coli O1:K1 / APEC.